Consider the following 598-residue polypeptide: Elongation factor 4 (598 aa).

In terms of domain architecture, tr-type G spans 4–181 (KKIRNFAIIA…AIVNLIPPPQ (178 aa)). GTP is bound by residues 16–21 (DHGKST) and 128–131 (NKID).

This sequence belongs to the TRAFAC class translation factor GTPase superfamily. Classic translation factor GTPase family. LepA subfamily.

Its subcellular location is the cell membrane. It catalyses the reaction GTP + H2O = GDP + phosphate + H(+). Required for accurate and efficient protein synthesis under certain stress conditions. May act as a fidelity factor of the translation reaction, by catalyzing a one-codon backward translocation of tRNAs on improperly translocated ribosomes. Back-translocation proceeds from a post-translocation (POST) complex to a pre-translocation (PRE) complex, thus giving elongation factor G a second chance to translocate the tRNAs correctly. Binds to ribosomes in a GTP-dependent manner. The sequence is that of Elongation factor 4 from Mesomycoplasma hyopneumoniae (strain 7448) (Mycoplasma hyopneumoniae).